Here is a 376-residue protein sequence, read N- to C-terminus: Ribosomal RNA large subunit methyltransferase G (376 aa).

It belongs to the methyltransferase superfamily. RlmG family.

It localises to the cytoplasm. The enzyme catalyses guanosine(1835) in 23S rRNA + S-adenosyl-L-methionine = N(2)-methylguanosine(1835) in 23S rRNA + S-adenosyl-L-homocysteine + H(+). Functionally, specifically methylates the guanine in position 1835 (m2G1835) of 23S rRNA. This chain is Ribosomal RNA large subunit methyltransferase G, found in Vibrio vulnificus (strain CMCP6).